The following is a 186-amino-acid chain: Tumor necrosis factor, alpha-induced protein 8-like protein 2 B (186 aa).

Belongs to the TNFAIP8 family. TNFAIP8L2 subfamily.

Functionally, acts as a negative regulator of innate and adaptive immunity by maintaining immune homeostasis. Negative regulator of Toll-like receptor and T-cell receptor function. Prevents hyperresponsiveness of the immune system and maintains immune homeostasis. Inhibits jun/ap1 and NF-kappa-B activation. Promotes Fas-induced apoptosis. This chain is Tumor necrosis factor, alpha-induced protein 8-like protein 2 B (tnfaip8l2b), found in Danio rerio (Zebrafish).